Consider the following 135-residue polypeptide: uncharacterized protein (135 aa).

This is an uncharacterized protein from Acanthamoeba polyphaga (Amoeba).